Reading from the N-terminus, the 281-residue chain is uncharacterized protein (281 aa).

This is an uncharacterized protein from Acanthamoeba polyphaga (Amoeba).